A 316-amino-acid chain; its full sequence is Ribosomal RNA small subunit methyltransferase H (316 aa).

S-adenosyl-L-methionine is bound by residues 35–37 (GGH), Asp-55, Phe-79, Asp-101, and Gln-108.

The protein belongs to the methyltransferase superfamily. RsmH family.

The protein resides in the cytoplasm. It carries out the reaction cytidine(1402) in 16S rRNA + S-adenosyl-L-methionine = N(4)-methylcytidine(1402) in 16S rRNA + S-adenosyl-L-homocysteine + H(+). Specifically methylates the N4 position of cytidine in position 1402 (C1402) of 16S rRNA. This is Ribosomal RNA small subunit methyltransferase H from Aliivibrio salmonicida (strain LFI1238) (Vibrio salmonicida (strain LFI1238)).